Reading from the N-terminus, the 460-residue chain is ATP synthase subunit beta (460 aa).

Position 150–157 (Gly-150–Thr-157) interacts with ATP.

It belongs to the ATPase alpha/beta chains family. In terms of assembly, F-type ATPases have 2 components, CF(1) - the catalytic core - and CF(0) - the membrane proton channel. CF(1) has five subunits: alpha(3), beta(3), gamma(1), delta(1), epsilon(1). CF(0) has three main subunits: a(1), b(2) and c(9-12). The alpha and beta chains form an alternating ring which encloses part of the gamma chain. CF(1) is attached to CF(0) by a central stalk formed by the gamma and epsilon chains, while a peripheral stalk is formed by the delta and b chains.

Its subcellular location is the cell inner membrane. The enzyme catalyses ATP + H2O + 4 H(+)(in) = ADP + phosphate + 5 H(+)(out). Its function is as follows. Produces ATP from ADP in the presence of a proton gradient across the membrane. The catalytic sites are hosted primarily by the beta subunits. This is ATP synthase subunit beta from Salmonella paratyphi A (strain ATCC 9150 / SARB42).